We begin with the raw amino-acid sequence, 676 residues long: Vitamin K-dependent protein S (676 aa).

The first 24 residues, 1-24 (MRVLGGRCGALLACLLLVLPVSEA), serve as a signal peptide directing secretion. A propeptide spanning residues 25–41 (NFLSKQQASQVLVRKRR) is cleaved from the precursor. Positions 42–87 (ANSLLEETKQGNLERECIEELCNKEEAREVFENDPETDYFYPKYLV) constitute a Gla domain. 4-carboxyglutamate occurs at positions 47, 48, 55, 57, 60, 61, 66, 67, 70, 73, and 77. Cys-58 and Cys-63 are disulfide-bonded. A thrombin-sensitive region spans residues 88–116 (CLRSFQTGLFTAARQSTNAYPDLRSCVNA). One can recognise an EGF-like 1 domain in the interval 117 to 155 (IPDQCSPLPCNEDGYMSCKDGKASFTCTCKPGWQGEKCE). Intrachain disulfides connect Cys-121–Cys-134, Cys-126–Cys-143, Cys-145–Cys-154, Cys-161–Cys-175, Cys-171–Cys-184, Cys-186–Cys-199, Cys-205–Cys-217, Cys-212–Cys-226, Cys-228–Cys-241, Cys-247–Cys-256, Cys-252–Cys-265, Cys-267–Cys-282, and Cys-449–Cys-475. (3R)-3-hydroxyaspartate is present on Asp-136. Residues 157 to 200 (DINECKDPSNINGGCSQICDNTPGSYHCSCKNGFVMLSNKKDCK) enclose the EGF-like 2; calcium-binding domain. An EGF-like 3; calcium-binding domain is found at 201 to 242 (DVDECSLKPSICGTAVCKNIPGDFECECPEGYRYNLKSKSCE). The region spanning 243 to 283 (DIDECSENMCAQLCVNYPGGYTCYCDGKKGFKLAQDQKSCE) is the EGF-like 4; calcium-binding domain. Laminin G-like domains are found at residues 299 to 475 (LLYL…NKHC) and 484 to 666 (YYPG…AHSC). N-linked (GlcNAc...) asparagine glycans are attached at residues Asn-499, Asn-509, and Asn-530. A disulfide bond links Cys-639 and Cys-666.

In terms of processing, the iron and 2-oxoglutarate dependent 3-hydroxylation of aspartate and asparagine is (R) stereospecific within EGF domains. Plasma.

It is found in the secreted. In terms of biological role, anticoagulant plasma protein; it is a cofactor to activated protein C in the degradation of coagulation factors Va and VIIIa. It helps to prevent coagulation and stimulating fibrinolysis. The polypeptide is Vitamin K-dependent protein S (PROS1) (Homo sapiens (Human)).